Consider the following 212-residue polypeptide: MFITFEGIEGSGKSTALARLKDWLQEHGHGATLTREPGGSRLGGILRSILLDIGNDDLTGETELFLYLADRSQHVHQVIRPALAEGVAVISDRYADSTVVYQGYGRGLDPALLHRLNDVAVRGLWPDLTLLFDLEPEIGLKRATTRNLREGTGATEGRFEAESLAFHTRVREGYLTWAALNKERFRIIDAAASPDEVFEQVRSAVADVFTIG.

Residue 7–14 (GIEGSGKS) coordinates ATP.

This sequence belongs to the thymidylate kinase family.

It catalyses the reaction dTMP + ATP = dTDP + ADP. Its function is as follows. Phosphorylation of dTMP to form dTDP in both de novo and salvage pathways of dTTP synthesis. In Oleidesulfovibrio alaskensis (strain ATCC BAA-1058 / DSM 17464 / G20) (Desulfovibrio alaskensis), this protein is Thymidylate kinase.